A 2151-amino-acid chain; its full sequence is Polycystin-1-like protein 3 (2151 aa).

An N-terminal signal peptide occupies residues 1-20 (MLLQRRSWLWLYIRIGVILG). Over 25 to 1073 (RKPSIREQHG…IKLLLHVTNN (1049 aa)) the chain is Extracellular. The C-type lectin domain maps to 34 to 142 (GGNSCYQLNR…CIEKHHFICQ (109 aa)). 2 disulfides stabilise this stretch: Cys55–Cys141 and Cys116–Cys133. An N-linked (GlcNAc...) asparagine glycan is attached at Asn89. The segment covering 222–245 (SLTGRPQVTSDTLASSSPPQGTSD) has biased composition (polar residues). The interval 222–609 (SLTGRPQVTS…SSSPPWPVIT (388 aa)) is disordered. The span at 246–348 (TPASSSPPQV…ASSSPPQGTS (103 aa)) shows a compositional bias: low complexity. Polar residues-rich tracts occupy residues 349-363 (DTPA…TLDT) and 371-600 (QGTS…TPAS). Asn566, Asn579, Asn592, Asn913, and Asn951 each carry an N-linked (GlcNAc...) asparagine glycan. The 163-residue stretch at 899–1061 (TSLNTSTDHF…FIVPRTVDVE (163 aa)) folds into the GAIN-B domain. Cystine bridges form between Cys1011–Cys1039 and Cys1026–Cys1041. Residues 1011 to 1061 (CYFWDRYNRTWKSDGCQVGPKSTILKTQCLCDHLTFFSSDFFIVPRTVDVE) are GPS. Residues 1045–1061 (TFFSSDFFIVPRTVDVE) form a stachel region. The chain crosses the membrane as a helical span at residues 1074–1094 (PVGVSLLSSLLGFYILLAMWA). Over 1095 to 1283 (SRKDREDMQK…NQFTRVQRLS (189 aa)) the chain is Cytoplasmic. In terms of domain architecture, PLAT spans 1119–1236 (SHYLIQVYTG…GNCERDRVFT (118 aa)). Residues 1284-1304 (CCMALLLCDMVINIMFWKMGG) traverse the membrane as a helical segment. Over 1305-1320 (TTAKRGTEQLGPLAVT) the chain is Extracellular. A helical membrane pass occupies residues 1321 to 1341 (LSELLVSIQTSIILFPIHLIF). Residues 1342–1533 (GRLFQLIHPP…FCLFRWLKCS (192 aa)) are Cytoplasmic-facing. A helical transmembrane segment spans residues 1534-1554 (CWLLLGVISLASAFFITLYSL). Topologically, residues 1555–1575 (ELDKDQATSWVISMMLSVLQD) are extracellular. Residues 1576–1596 (IFISQPIKVIFLTLLFSLMAN) form a helical membrane-spanning segment. At 1597–1665 (HMPWLNKDKE…KLTGGTLVQI (69 aa)) the chain is on the cytoplasmic side. The helical transmembrane segment at 1666-1676 (LFLTLLMTTVY) threads the bilayer. At 1677 to 1892 (SAKDSSRFFL…SLTSLQSSER (216 aa)) the chain is on the extracellular side. N-linked (GlcNAc) asparagine glycans are attached at residues Asn1712 and Asn1822. The chain crosses the membrane as a helical span at residues 1893-1921 (GFAWIVSQVVYYLLVCYYAFIQGCRLKRQ). The Cytoplasmic segment spans residues 1922–1930 (RLAFFTRKR). A helical membrane pass occupies residues 1931 to 1949 (NLLDTSIVLISFSILGLSM). Topologically, residues 1950-1980 (QSLSLLHKKMQQYHCDRDRFISFYEALRVNS) are extracellular. Residues 1981 to 2002 (AVTHLRGFLLLFATVRVWDLLR) form a helical membrane-spanning segment. Topologically, residues 2003–2019 (HHAQLQVINKTLSKAWD) are cytoplasmic. Residues 2020 to 2044 (EVLGFILIIVVLLSSYAMTFNLLFG) traverse the membrane as a helical segment. A channel pore-region region spans residues 2043–2081 (FGWSISDYQSFFRSIVTVVGLLMGTSKHKEVIALYPILG). The Extracellular segment spans residues 2045 to 2077 (WSISDYQSFFRSIVTVVGLLMGTSKHKEVIALY). A helical transmembrane segment spans residues 2078 to 2097 (PILGSLLVLSSIILMGLVII). Residues 2098–2151 (NLFVSAILIAFGKERKACEKEATLTDMLLQKLSSLLGIRLHQNPSEEHADNTGY) lie on the Cytoplasmic side of the membrane.

This sequence belongs to the polycystin family. Heterotetramer with PKD2L1, composed of 3 subunit of PKD2L1 and 1 subunit of PKD1L3. Autoproteolytically processed at the GPS region of the GAIN-B domain; this cleavage modulates receptor activity. In terms of tissue distribution, expressed in a subset of taste receptor cells (type III taste cells) distinct from those involved in bitter, sweet and umami taste. Expressed in circumvallate and foliate taste buds, but not in surrounding non-gustatory lingual epithelium cells. Expressed in testis.

Its subcellular location is the cell membrane. The catalysed reaction is Ca(2+)(in) = Ca(2+)(out). It carries out the reaction Na(+)(in) = Na(+)(out). The enzyme catalyses K(+)(in) = K(+)(out). It catalyses the reaction Mg(2+)(in) = Mg(2+)(out). Its activity is regulated as follows. The non-selective cation channel is gated following an off-response property by acid: gated open after the removal of acid stimulus, but not during acid application. Non-selective cation channel activity is inhibited by capsaicin. Regulation of non-selective cation channel activity by external Ca(2+) is bimodal, first sensitizing and subsequently inactivating the current. The apo (closed) heterotetramer has an asymmetric selectivity filter (SF) guarded by Lys-2069 in absence of Ca(2+). However, Ca(2+)-entrance to the SF vestibule is accompanied by a swing motion of Lys-2069 on PKD1L3. In terms of biological role, pore-forming subunit of a heterotetrameric, non-selective cation channel that is permeable to Ca(2+). Also shows permeability towards NA(1+), K(+) and Mg(2+). Heterotetrameric complex channel is activated by external low pH and Ca(2+), but opens only when the extracellular pH rises again and after the removal of acid stimulus. May act as a sour taste receptor in gustatory cells; however, its contribution to sour taste perception is unclear in vivo and may be indirect. The protein is Polycystin-1-like protein 3 of Mus musculus (Mouse).